A 435-amino-acid chain; its full sequence is Probable protein arginine N-methyltransferase 6 (435 aa).

Residues 1 to 48 form a disordered region; that stretch reads MQSGGDFSNGFHGDHHRELELEDKQGPSLSSFGRAKKRSHAGARDPRG. Residues 12 to 25 are compositionally biased toward basic and acidic residues; the sequence is HGDHHRELELEDKQ. The SAM-dependent MTase PRMT-type domain maps to 80 to 418; the sequence is DVAYFHSYAH…KENKRFMNIH (339 aa). S-adenosyl-L-methionine contacts are provided by H93, R102, G126, D148, and E177. Active-site residues include E191 and E200. A disordered region spans residues 333–377; that stretch reads PAKNTSETSIASGSSSISPSGEVNQKKRTNPSDALVLSTSPESPP. Residues 337–354 are compositionally biased toward low complexity; it reads TSETSIASGSSSISPSGE.

The protein belongs to the class I-like SAM-binding methyltransferase superfamily. Protein arginine N-methyltransferase family. PRMT6 subfamily.

Functionally, arginine methyltransferase that can both catalyze the formation of omega-N monomethylarginine (MMA) and asymmetrical dimethylarginine (aDMA). In Arabidopsis thaliana (Mouse-ear cress), this protein is Probable protein arginine N-methyltransferase 6 (PRMT6).